The following is a 232-amino-acid chain: Protein FAM246B (232 aa).

Residues 19–31 (EVLRRVTGRRRDP) show a composition bias toward basic and acidic residues. 4 disordered regions span residues 19–47 (EVLR…RAPG), 80–101 (AAGA…VCGE), 151–179 (ALLP…GPTL), and 191–232 (AASR…GGGD). A compositionally biased stretch (basic residues) spans 211–220 (APARKNHKKM).

Belongs to the FAM246 family.

The protein is Protein FAM246B of Homo sapiens (Human).